The primary structure comprises 193 residues: Acyl carrier protein phosphodiesterase (193 aa).

This sequence belongs to the AcpH family.

It carries out the reaction holo-[ACP] + H2O = apo-[ACP] + (R)-4'-phosphopantetheine + H(+). Functionally, converts holo-ACP to apo-ACP by hydrolytic cleavage of the phosphopantetheine prosthetic group from ACP. The polypeptide is Acyl carrier protein phosphodiesterase (Yersinia pestis).